A 167-amino-acid polypeptide reads, in one-letter code: Ribosome maturation factor RimM (167 aa).

The region spanning 94–167 is the PRC barrel domain; sequence EENEYFIKDL…VMVVHLLEGL (74 aa).

It belongs to the RimM family. As to quaternary structure, binds ribosomal protein uS19.

The protein resides in the cytoplasm. In terms of biological role, an accessory protein needed during the final step in the assembly of 30S ribosomal subunit, possibly for assembly of the head region. Essential for efficient processing of 16S rRNA. May be needed both before and after RbfA during the maturation of 16S rRNA. It has affinity for free ribosomal 30S subunits but not for 70S ribosomes. The polypeptide is Ribosome maturation factor RimM (Thermoanaerobacter pseudethanolicus (strain ATCC 33223 / 39E) (Clostridium thermohydrosulfuricum)).